Here is a 148-residue protein sequence, read N- to C-terminus: uncharacterized protein (148 aa).

The signal sequence occupies residues 1 to 18 (MKIILTVLAGVGLLSAGG). Cysteine 19 carries the N-palmitoyl cysteine lipid modification. Cysteine 19 is lipidated: S-diacylglycerol cysteine.

The protein localises to the cell membrane. This is an uncharacterized protein from Bacillus subtilis (strain 168).